The chain runs to 130 residues: Small ribosomal subunit protein uS9 (130 aa).

This sequence belongs to the universal ribosomal protein uS9 family.

This is Small ribosomal subunit protein uS9 from Magnetococcus marinus (strain ATCC BAA-1437 / JCM 17883 / MC-1).